The sequence spans 320 residues: Sliding-clamp-loader large subunit (320 aa).

ATP is bound by residues Glu12–Tyr15, Ile24, Gly53–Thr58, and Arg205.

This sequence belongs to the Tevenvirinae sliding-clamp-loader large subunit family. In terms of assembly, the sliding-clamp-loader consists of 4 large subunits and 1 small subunit. Interacts with the sliding clamp; this interaction allows the sliding-clamp-loader to open the sliding clamp. Part of the replicase complex that includes the DNA polymerase, the polymerase clamp, the clamp loader complex, the single-stranded DNA binding protein, the primase, the helicase and the helicase assembly factor.

Functionally, forms the sliding-clamp-loader together with the small subunit. Functions as an ATPase enzyme. The clamp loader holds the clamp in an open conformation and places it onto the DNA. 4 ATP molecules must bind to the sliding-clamp-loader before the latter can open the sliding clamp. ATP hydrolysis triggers the detachment of the sliding clamp from the sliding-clamp-loader, freeing the sliding clamp to track along DNA. In Escherichia phage RB69 (Bacteriophage RB69), this protein is Sliding-clamp-loader large subunit (44).